The chain runs to 79 residues: RNA-binding protein Hfq (79 aa).

The 61-residue stretch at 10–70 folds into the Sm domain; the sequence is DAFLNHVRKT…ISTIMPAQPI (61 aa).

This sequence belongs to the Hfq family. As to quaternary structure, homohexamer.

RNA chaperone that binds small regulatory RNA (sRNAs) and mRNAs to facilitate mRNA translational regulation in response to envelope stress, environmental stress and changes in metabolite concentrations. Also binds with high specificity to tRNAs. The polypeptide is RNA-binding protein Hfq (Ruegeria pomeroyi (strain ATCC 700808 / DSM 15171 / DSS-3) (Silicibacter pomeroyi)).